Reading from the N-terminus, the 172-residue chain is MAKKVAIILTNEFEDIELTSPKEAIEEAGHETVVIGDQANSEVVGKHGTKVAVDVSIADAKPEDFDGLLIPGGFSPDHLRGDAEGRYGTFAKYFTKNDVPAFAICHGPQILIDTDDLNGRTLTAVLNVRKDLANAGAQVVDESVVVDKNIVTSRTPDDLDDFNREIVNQLND.

The PfpI endopeptidase domain maps to 3 to 171; the sequence is KKVAIILTNE…FNREIVNQLN (169 aa).

It belongs to the peptidase C56 family.

This is an uncharacterized protein from Staphylococcus saprophyticus subsp. saprophyticus (strain ATCC 15305 / DSM 20229 / NCIMB 8711 / NCTC 7292 / S-41).